The sequence spans 419 residues: Acetyltransferase fsoF (419 aa).

An N-linked (GlcNAc...) asparagine glycan is attached at N2. 2 helical membrane-spanning segments follow: residues 4–24 (TIIS…VVGF) and 62–82 (AFLG…AILS). The tract at residues 89–114 (QSPTSSLGGLIPPTTRDTPKTQNNAT) is disordered. N-linked (GlcNAc...) asparagine glycans are attached at residues N112 and N169. Helical transmembrane passes span 230–250 (YWAI…VVAV), 314–334 (YVFM…SDVS), 337–357 (IPLG…GIML), and 386–406 (VSGP…WIYM).

This sequence belongs to the wax synthase family.

It localises to the membrane. The enzyme catalyses 3-O-(beta-D-glucopyranosyl)-2alpha-hydroxyisomotiol + acetyl-CoA = 3-O-(beta-D-glucopyranosyl)-2alpha-acetoxyisomotiol + CoA. The catalysed reaction is 2-deacetylfuscoatroside + acetyl-CoA = fuscoatroside + CoA. It functions in the pathway secondary metabolite biosynthesis; terpenoid biosynthesis. Functionally, terpene cyclase-glycosyl transferase fusion protein; part of the gene cluster that mediates the biosynthesis of the enfumafungin-type antibiotic, fuscoatroside. Within the pathway, fsoF catalyzes the acetylation of C2-alpha-OH following the C2 hydroxylation by the cytochrome monooxygenase fsoD. The fuscoatroside biosynthesis is initiated by the cyclization of 2,3(S)-oxidosqualene through FsoA's terpene cyclase (TC) domain, leading to the formation of the fernane skeleton isomotiol, harboring a fernane triterpene skeleton with a C8-C9 double bond. Subsequently, C2-alpha-hydroxylation mediated by fsoD results in the production of 2-alpha-hydroxy-isomotiol, which is further acetylated by fsoF. The glycosyltransferase (GT) domain of FsoA may convert isomotiol, 2-alpha-hydroxy-isomotiol, and the acetylated derivative of 2-alpha-hydroxy-isomotiol into their corresponding glycosides 3-O-(beta-D-glucopyranosyl)-isomotiol, 3-O-(beta-D-glucopyranosyl)-2-alpha-hydroxy-isomotiol, and 3-O-(beta-D-glucopyranosyl)-2-alpha-acetoxy-isomotiol, which then undergo oxidative cleavage under the action of fsoE to form s 2-deacetoxy-fuscoatroside, 2-deacetyl-fuscoatroside, and fuscoatroside, respectively. Although hydroxylation followed by acetylation of 3-O-(beta-D-glucopyranosyl)-isomotiol and 2-deacetoxy-fuscoatroside by fsoD and fsoF could not be ruled out, this process is likely to occur with difficulty due to bulky steric hindrance caused by the presence of a glycan at C3 in these compounds. Interestingly, fsoE can also utilize the aglycones isomotiol and 2-alpha-hydroxy-isomotiol as substrates to generate 19-beta-hydroxy-isomotiol and 2-alpha,19-beta-dihydroxy-isomotiol, respectively. These reactions occur with lower efficiency. Finally, fsoE can further convert 2-alpha,19-beta-dihydroxy-isomotiol into 2-alpha-hydroxy-ismotiol-19-one and 2-alpha-hydroxy-ismotiol-19-one into 2-deacetyl-3-deglucopyranosyl-fuscoatroside. This chain is Acetyltransferase fsoF, found in Humicola fuscoatra.